The sequence spans 202 residues: Small ribosomal subunit protein uS3 (202 aa).

One can recognise a KH type-2 domain in the interval 18–87 (LNEYLQRQLV…NPQIDVVEVP (70 aa)).

Belongs to the universal ribosomal protein uS3 family. In terms of assembly, part of the 30S ribosomal subunit.

In terms of biological role, binds the lower part of the 30S subunit head. The protein is Small ribosomal subunit protein uS3 of Thermofilum pendens (strain DSM 2475 / Hrk 5).